We begin with the raw amino-acid sequence, 202 residues long: Small ribosomal subunit protein uS5 (202 aa).

A compositionally biased stretch (gly residues) spans 1 to 13 (MPGQQRRGGGSGG). The disordered stretch occupies residues 1–31 (MPGQQRRGGGSGGSDRRERRDRSGGGPAQEK). Positions 14–23 (SDRRERRDRS) are enriched in basic and acidic residues. The S5 DRBM domain maps to 34–97 (YVERVVAINR…EEAKKHFFKV (64 aa)).

This sequence belongs to the universal ribosomal protein uS5 family. As to quaternary structure, part of the 30S ribosomal subunit. Contacts proteins S4 and S8.

Functionally, with S4 and S12 plays an important role in translational accuracy. Located at the back of the 30S subunit body where it stabilizes the conformation of the head with respect to the body. This chain is Small ribosomal subunit protein uS5, found in Parafrankia sp. (strain EAN1pec).